Reading from the N-terminus, the 306-residue chain is tRNA dimethylallyltransferase (306 aa).

ATP is bound at residue 9-16; sequence GPTAVGKT. 11 to 16 is a binding site for substrate; the sequence is TAVGKT. Positions 34-37 are interaction with substrate tRNA; it reads DSRQ.

It belongs to the IPP transferase family. As to quaternary structure, monomer. Mg(2+) serves as cofactor.

It carries out the reaction adenosine(37) in tRNA + dimethylallyl diphosphate = N(6)-dimethylallyladenosine(37) in tRNA + diphosphate. Its function is as follows. Catalyzes the transfer of a dimethylallyl group onto the adenine at position 37 in tRNAs that read codons beginning with uridine, leading to the formation of N6-(dimethylallyl)adenosine (i(6)A). The protein is tRNA dimethylallyltransferase of Roseiflexus castenholzii (strain DSM 13941 / HLO8).